The sequence spans 315 residues: Transaldolase (315 aa).

Catalysis depends on K128, which acts as the Schiff-base intermediate with substrate.

It belongs to the transaldolase family. Type 1 subfamily. Homodimer.

It is found in the cytoplasm. It carries out the reaction D-sedoheptulose 7-phosphate + D-glyceraldehyde 3-phosphate = D-erythrose 4-phosphate + beta-D-fructose 6-phosphate. It participates in carbohydrate degradation; pentose phosphate pathway; D-glyceraldehyde 3-phosphate and beta-D-fructose 6-phosphate from D-ribose 5-phosphate and D-xylulose 5-phosphate (non-oxidative stage): step 2/3. Its function is as follows. Transaldolase is important for the balance of metabolites in the pentose-phosphate pathway. In Opitutus terrae (strain DSM 11246 / JCM 15787 / PB90-1), this protein is Transaldolase.